The sequence spans 447 residues: C4-dicarboxylate transport protein (447 aa).

A run of 9 helical transmembrane segments spans residues 13–33, 49–69, 81–101, 149–169, 189–209, 227–247, 302–322, 336–356, and 357–377; these read SLYF…HYWP, LIKM…IAGM, LALL…LLIV, AFAK…GFAL, VLFA…FGAM, LMGT…GLIA, GYSF…VFIA, TLLA…GSGF, and IVLA…LALI. The segment at 422 to 447 is disordered; it reads ETEAEANEPEAVLDEIDQHMPVPAAR. Over residues 425–436 the composition is skewed to acidic residues; that stretch reads AEANEPEAVLDE.

It belongs to the dicarboxylate/amino acid:cation symporter (DAACS) (TC 2.A.23) family.

It localises to the cell inner membrane. Responsible for the transport of dicarboxylates such as succinate, fumarate, and malate from the periplasm across the membrane. This Leptothrix cholodnii (strain ATCC 51168 / LMG 8142 / SP-6) (Leptothrix discophora (strain SP-6)) protein is C4-dicarboxylate transport protein.